A 308-amino-acid chain; its full sequence is tRNA dimethylallyltransferase (308 aa).

11-18 (GPTGIGKT) is a binding site for ATP. 13-18 (TGIGKT) serves as a coordination point for substrate. The interaction with substrate tRNA stretch occupies residues 36–39 (DSMQ).

It belongs to the IPP transferase family. As to quaternary structure, monomer. Requires Mg(2+) as cofactor.

The enzyme catalyses adenosine(37) in tRNA + dimethylallyl diphosphate = N(6)-dimethylallyladenosine(37) in tRNA + diphosphate. Catalyzes the transfer of a dimethylallyl group onto the adenine at position 37 in tRNAs that read codons beginning with uridine, leading to the formation of N6-(dimethylallyl)adenosine (i(6)A). This chain is tRNA dimethylallyltransferase, found in Lactobacillus gasseri (strain ATCC 33323 / DSM 20243 / BCRC 14619 / CIP 102991 / JCM 1131 / KCTC 3163 / NCIMB 11718 / NCTC 13722 / AM63).